The primary structure comprises 126 residues: Glycine cleavage system H protein (126 aa).

The Lipoyl-binding domain occupies 21-103; that stretch reads TVTIGISEHA…YEGGWIVKVK (83 aa). Lys-62 carries the N6-lipoyllysine modification.

Belongs to the GcvH family. In terms of assembly, the glycine cleavage system is composed of four proteins: P, T, L and H. It depends on (R)-lipoate as a cofactor.

The glycine cleavage system catalyzes the degradation of glycine. The H protein shuttles the methylamine group of glycine from the P protein to the T protein. This Vibrio parahaemolyticus serotype O3:K6 (strain RIMD 2210633) protein is Glycine cleavage system H protein.